We begin with the raw amino-acid sequence, 237 residues long: Phosphoribosylaminoimidazole-succinocarboxamide synthase (237 aa).

This sequence belongs to the SAICAR synthetase family.

It carries out the reaction 5-amino-1-(5-phospho-D-ribosyl)imidazole-4-carboxylate + L-aspartate + ATP = (2S)-2-[5-amino-1-(5-phospho-beta-D-ribosyl)imidazole-4-carboxamido]succinate + ADP + phosphate + 2 H(+). It functions in the pathway purine metabolism; IMP biosynthesis via de novo pathway; 5-amino-1-(5-phospho-D-ribosyl)imidazole-4-carboxamide from 5-amino-1-(5-phospho-D-ribosyl)imidazole-4-carboxylate: step 1/2. The sequence is that of Phosphoribosylaminoimidazole-succinocarboxamide synthase from Photorhabdus laumondii subsp. laumondii (strain DSM 15139 / CIP 105565 / TT01) (Photorhabdus luminescens subsp. laumondii).